The following is a 600-amino-acid chain: Glutamine--fructose-6-phosphate aminotransferase [isomerizing] (600 aa).

Catalysis depends on C2, which acts as the Nucleophile; for GATase activity. In terms of domain architecture, Glutamine amidotransferase type-2 spans 2–217 (CGIVGYIGQN…DKEIVLVSRN (216 aa)). SIS domains follow at residues 283–422 (IRTA…VKGL) and 452–590 (LARD…VDKP). Catalysis depends on K595, which acts as the For Fru-6P isomerization activity.

In terms of assembly, homodimer.

It localises to the cytoplasm. The catalysed reaction is D-fructose 6-phosphate + L-glutamine = D-glucosamine 6-phosphate + L-glutamate. Its function is as follows. Catalyzes the first step in hexosamine metabolism, converting fructose-6P into glucosamine-6P using glutamine as a nitrogen source. In Oceanobacillus iheyensis (strain DSM 14371 / CIP 107618 / JCM 11309 / KCTC 3954 / HTE831), this protein is Glutamine--fructose-6-phosphate aminotransferase [isomerizing].